A 190-amino-acid chain; its full sequence is Potassium-transporting ATPase KdpC subunit (190 aa).

A helical membrane pass occupies residues 10–30; sequence TFIFLLLITGGVYPLLTTVLG.

This sequence belongs to the KdpC family. In terms of assembly, the system is composed of three essential subunits: KdpA, KdpB and KdpC.

The protein resides in the cell inner membrane. Its function is as follows. Part of the high-affinity ATP-driven potassium transport (or Kdp) system, which catalyzes the hydrolysis of ATP coupled with the electrogenic transport of potassium into the cytoplasm. This subunit acts as a catalytic chaperone that increases the ATP-binding affinity of the ATP-hydrolyzing subunit KdpB by the formation of a transient KdpB/KdpC/ATP ternary complex. The sequence is that of Potassium-transporting ATPase KdpC subunit from Escherichia coli O139:H28 (strain E24377A / ETEC).